Reading from the N-terminus, the 91-residue chain is Protein YchS (91 aa).

The protein is Protein YchS (ychS) of Escherichia coli O157:H7.